The sequence spans 463 residues: Ribosomal protein uS12 methylthiotransferase RimO (463 aa).

Residues 15–130 (PKVGMVSLGC…VMQAVHSHLP (116 aa)) enclose the MTTase N-terminal domain. Residues Cys-24, Cys-60, Cys-89, Cys-161, Cys-165, and Cys-168 each contribute to the [4Fe-4S] cluster site. The Radical SAM core domain occupies 147-392 (LTPRHYAYLK…MEVAEEVSAA (246 aa)). The TRAM domain maps to 395–463 (ARKIGKTLKV…ADSHDLWGEV (69 aa)).

It belongs to the methylthiotransferase family. RimO subfamily. [4Fe-4S] cluster is required as a cofactor.

It is found in the cytoplasm. The enzyme catalyses L-aspartate(89)-[ribosomal protein uS12]-hydrogen + (sulfur carrier)-SH + AH2 + 2 S-adenosyl-L-methionine = 3-methylsulfanyl-L-aspartate(89)-[ribosomal protein uS12]-hydrogen + (sulfur carrier)-H + 5'-deoxyadenosine + L-methionine + A + S-adenosyl-L-homocysteine + 2 H(+). Functionally, catalyzes the methylthiolation of an aspartic acid residue of ribosomal protein uS12. The sequence is that of Ribosomal protein uS12 methylthiotransferase RimO from Burkholderia pseudomallei (strain 668).